Here is a 106-residue protein sequence, read N- to C-terminus: MPRKTSHEHDHGLVVETSKPEVAPPPRYQVLLLNDDYTPMDFVVTVLQQFFNLELERATQVMLHVHTRGRGVCGVYSREVAESKVAQVNEFSRMNQHPLLCTMEQA.

Positions 1-13 are enriched in basic and acidic residues; it reads MPRKTSHEHDHGL. The disordered stretch occupies residues 1–21; it reads MPRKTSHEHDHGLVVETSKPE.

The protein belongs to the ClpS family. Binds to the N-terminal domain of the chaperone ClpA.

In terms of biological role, involved in the modulation of the specificity of the ClpAP-mediated ATP-dependent protein degradation. This is ATP-dependent Clp protease adapter protein ClpS from Xanthomonas campestris pv. campestris (strain 8004).